The primary structure comprises 323 residues: UPF0065 protein BP0148 (323 aa).

Positions 1-24 (MKPFSLLRRIATIALLMAASSAHA) are cleaved as a signal peptide.

The protein belongs to the UPF0065 (bug) family.

The protein localises to the periplasm. In Bordetella pertussis (strain Tohama I / ATCC BAA-589 / NCTC 13251), this protein is UPF0065 protein BP0148.